The sequence spans 238 residues: Peroxisomal coenzyme A diphosphatase NUDT7 (238 aa).

N6-succinyllysine is present on Lys-20. Positions 37-172 constitute a Nudix hydrolase domain; that stretch reads YNKYSVLLPL…VTRLGHRFIN (136 aa). The short motif at 77–98 is the Nudix box element; it reads KRDPTDMDDAATALREAQEEVG. Residues Glu-92 and Glu-96 each coordinate Mg(2+). The short motif at 236 to 238 is the Microbody targeting signal element; sequence SRL.

Belongs to the Nudix hydrolase family. PCD1 subfamily. As to quaternary structure, monomer. It depends on Mn(2+) as a cofactor. Requires Mg(2+) as cofactor. In terms of tissue distribution, expressed in liver, kidney, pancreas, pituitary, small intestine, spleen, heart and placenta. Weakly expressed in brain.

It is found in the peroxisome. It carries out the reaction hexanoyl-CoA + H2O = hexanoyl-4'-phosphopantetheine + adenosine 3',5'-bisphosphate + 2 H(+). It catalyses the reaction octanoyl-CoA + H2O = S-octanoyl-4'-phosphopantetheine + adenosine 3',5'-bisphosphate + 2 H(+). The enzyme catalyses butanoyl-CoA + H2O = S-butanoyl-4'-phosphopantetheine + adenosine 3',5'-bisphosphate + 2 H(+). The catalysed reaction is decanoyl-CoA + H2O = decanoyl-4'-phosphopantetheine + adenosine 3',5'-bisphosphate + 2 H(+). It carries out the reaction dodecanoyl-CoA + H2O = S-dodecanoyl-4'-phosphopantetheine + adenosine 3',5'-bisphosphate + 2 H(+). It catalyses the reaction tetradecanoyl-CoA + H2O = tetradecanoyl-4'-phosphopantetheine + adenosine 3',5'-bisphosphate + 2 H(+). The enzyme catalyses choloyl-CoA + H2O = S-choloyl-4'-phosphopantetheine + adenosine 3',5'-bisphosphate + 2 H(+). The catalysed reaction is 3alpha,7alpha,12alpha-trihydroxy-5beta-cholestan-26-oyl-CoA + H2O = 3alpha,7alpha,12alpha-trihydroxy-5beta-cholestan-26-oyl-4'-phosphopantetheine + adenosine 3',5'-bisphosphate + 2 H(+). It carries out the reaction acetyl-CoA + H2O = S-acetyl-4'-phosphopantetheine + adenosine 3',5'-bisphosphate + 2 H(+). It catalyses the reaction CoA + H2O = (R)-4'-phosphopantetheine + adenosine 3',5'-bisphosphate + 2 H(+). The enzyme catalyses propanoyl-CoA + H2O = propanoyl-4'-phosphopantetheine + adenosine 3',5'-bisphosphate + 2 H(+). The catalysed reaction is malonyl-CoA + H2O = malonyl-4'-phosphopantetheine + adenosine 3',5'-bisphosphate + 2 H(+). It carries out the reaction succinyl-CoA + H2O = succinyl-4'-phosphopantetheine + adenosine 3',5'-bisphosphate + 2 H(+). It catalyses the reaction a 5'-end CoA-ribonucleoside in mRNA + H2O = a 5'-end phospho-adenosine-phospho-ribonucleoside in mRNA + (R)-4'-phosphopantetheine + 2 H(+). Its activity is regulated as follows. Inhibited by fluoride. Fatty acyl-coenzyme A (CoA) diphosphatase that hydrolyzes fatty acyl-CoA to yield acyl-4'-phosphopantetheine and adenosine 3',5'-bisphosphate. Cleaves CoA, CoA esters and oxidized CoA with similar efficiencies. Preferentially hydrolyzes medium-chain acyl-CoAs and bile acid-CoAs. Has no activity toward NDP-sugars, CDP-alcohols, (deoxy)nucleoside 5'-triphosphates, nucleoside 5'-di or monophosphates, diadenosine polyphosphates, NAD, NADH, NADP, NADPH or thymidine-5'-monophospho-p-nitrophenyl ester. May be required to eliminate oxidized CoA from peroxisomes, or regulate CoA and acyl-CoA levels in this organelle in response to metabolic demand. Does not play a role in U8 snoRNA decapping activity. Binds U8 snoRNA. Exhibits decapping activity towards dpCoA-capped RNAs in vitro. In Homo sapiens (Human), this protein is Peroxisomal coenzyme A diphosphatase NUDT7.